The primary structure comprises 492 residues: MO25-like protein 3 (492 aa).

A disordered region spans residues 442-492 (SRAGIRFGETRNVKGSPRSRSQSPRPPTGPEPSPRTTSYQNVRFPPEDSSR). The span at 465-474 (PRPPTGPEPS) shows a compositional bias: pro residues.

Belongs to the Mo25 family.

The protein is MO25-like protein 3 of Caenorhabditis briggsae.